The following is a 435-amino-acid chain: Methylenetetrahydrofolate--tRNA-(uracil-5-)-methyltransferase TrmFO (435 aa).

Position 9-14 (9-14 (GAGLAG)) interacts with FAD.

This sequence belongs to the MnmG family. TrmFO subfamily. It depends on FAD as a cofactor.

The protein resides in the cytoplasm. It carries out the reaction uridine(54) in tRNA + (6R)-5,10-methylene-5,6,7,8-tetrahydrofolate + NADH + H(+) = 5-methyluridine(54) in tRNA + (6S)-5,6,7,8-tetrahydrofolate + NAD(+). The catalysed reaction is uridine(54) in tRNA + (6R)-5,10-methylene-5,6,7,8-tetrahydrofolate + NADPH + H(+) = 5-methyluridine(54) in tRNA + (6S)-5,6,7,8-tetrahydrofolate + NADP(+). In terms of biological role, catalyzes the folate-dependent formation of 5-methyl-uridine at position 54 (M-5-U54) in all tRNAs. This is Methylenetetrahydrofolate--tRNA-(uracil-5-)-methyltransferase TrmFO from Staphylococcus aureus (strain JH1).